The chain runs to 413 residues: MIEETHPNDDSYIVRVKAVVMTRDDSSGGWLAQEGGGLSRVGVCKVMPAELTGRSDFLIHGERLKDKQVILECFVRKDLIYTKATPTFHHWKVDNKKCGLTFQSPADARAFDRGVRKALEDLTEGSTTSSSTLQNEAELGDDDVFTTATDSSSNSSQKKDHSTQLVATSTFYEPHPHRCILQYRPPERYTLDQKFSRNLFPFEDEEIVRINPRERWMITGYEDYRYAAVPDKFIQPEDSDSYVQISKNDPVKHDYTYPYVPSPDFTQCDLKRPCGGGSTVVSTQPRAFILKGKRRKEDGERSRCVYCRDMFNHEENRRGQCHDAPDPIRTCIHRVSFMWCADSMLYHCMSDPEGDYSDPCSCDTSEERFCLRWTALLGLAMLAPCLCCYPPLHGCHRCGVACGCCGGKHKAVG.

The 118-residue stretch at 5–122 (THPNDDSYIV…RGVRKALEDL (118 aa)) folds into the WH1 domain. Positions 122–163 (LTEGSTTSSSTLQNEAELGDDDVFTTATDSSSNSSQKKDHST) are disordered. The 54-residue stretch at 195–248 (FSRNLFPFEDEEIVRINPRERWMITGYEDYRYAAVPDKFIQPEDSDSYVQISKN) folds into the KBD domain. Positions 303–411 (RCVYCRDMFN…CGCCGGKHKA (109 aa)) constitute an SPR domain.

It localises to the cell membrane. Its subcellular location is the cytoplasmic vesicle. It is found in the secretory vesicle membrane. The protein localises to the cytoplasm. Functionally, negatively regulates Ras signaling pathways and downstream activation of MAP kinases. This is Sprouty-related, EVH1 domain-containing protein 2 (spred2) from Danio rerio (Zebrafish).